The primary structure comprises 351 residues: S-adenosylmethionine:tRNA ribosyltransferase-isomerase (351 aa).

Belongs to the QueA family. Monomer.

Its subcellular location is the cytoplasm. It catalyses the reaction 7-aminomethyl-7-carbaguanosine(34) in tRNA + S-adenosyl-L-methionine = epoxyqueuosine(34) in tRNA + adenine + L-methionine + 2 H(+). The protein operates within tRNA modification; tRNA-queuosine biosynthesis. Functionally, transfers and isomerizes the ribose moiety from AdoMet to the 7-aminomethyl group of 7-deazaguanine (preQ1-tRNA) to give epoxyqueuosine (oQ-tRNA). The chain is S-adenosylmethionine:tRNA ribosyltransferase-isomerase from Fusobacterium nucleatum subsp. nucleatum (strain ATCC 25586 / DSM 15643 / BCRC 10681 / CIP 101130 / JCM 8532 / KCTC 2640 / LMG 13131 / VPI 4355).